Here is a 64-residue protein sequence, read N- to C-terminus: Large ribosomal subunit protein bL28 (64 aa).

Residues 1–21 (MAKKDQLTLRGPLYGNNRSHS) are disordered.

Belongs to the bacterial ribosomal protein bL28 family.

In Mycoplasma genitalium (strain ATCC 33530 / DSM 19775 / NCTC 10195 / G37) (Mycoplasmoides genitalium), this protein is Large ribosomal subunit protein bL28.